A 342-amino-acid polypeptide reads, in one-letter code: Holliday junction branch migration complex subunit RuvB (342 aa).

Positions 1-179 (MTNILSPEKS…FGIPMRLNFY (179 aa)) are large ATPase domain (RuvB-L). Residues I18, R19, G60, K63, T64, T65, 126 to 128 (EDF), R169, Y179, and R216 contribute to the ATP site. Residue T64 coordinates Mg(2+). Residues 180-250 (NTEELKKVLN…ISDFGLNRLE (71 aa)) form a small ATPAse domain (RuvB-S) region. Residues 253 to 342 (CIGLDSNDYR…HQFNIFNENE (90 aa)) form a head domain (RuvB-H) region. R289, R308, and R313 together coordinate DNA.

The protein belongs to the RuvB family. As to quaternary structure, homohexamer. Forms an RuvA(8)-RuvB(12)-Holliday junction (HJ) complex. HJ DNA is sandwiched between 2 RuvA tetramers; dsDNA enters through RuvA and exits via RuvB. An RuvB hexamer assembles on each DNA strand where it exits the tetramer. Each RuvB hexamer is contacted by two RuvA subunits (via domain III) on 2 adjacent RuvB subunits; this complex drives branch migration. In the full resolvosome a probable DNA-RuvA(4)-RuvB(12)-RuvC(2) complex forms which resolves the HJ.

It localises to the cytoplasm. It catalyses the reaction ATP + H2O = ADP + phosphate + H(+). Functionally, the RuvA-RuvB-RuvC complex processes Holliday junction (HJ) DNA during genetic recombination and DNA repair, while the RuvA-RuvB complex plays an important role in the rescue of blocked DNA replication forks via replication fork reversal (RFR). RuvA specifically binds to HJ cruciform DNA, conferring on it an open structure. The RuvB hexamer acts as an ATP-dependent pump, pulling dsDNA into and through the RuvAB complex. RuvB forms 2 homohexamers on either side of HJ DNA bound by 1 or 2 RuvA tetramers; 4 subunits per hexamer contact DNA at a time. Coordinated motions by a converter formed by DNA-disengaged RuvB subunits stimulates ATP hydrolysis and nucleotide exchange. Immobilization of the converter enables RuvB to convert the ATP-contained energy into a lever motion, pulling 2 nucleotides of DNA out of the RuvA tetramer per ATP hydrolyzed, thus driving DNA branch migration. The RuvB motors rotate together with the DNA substrate, which together with the progressing nucleotide cycle form the mechanistic basis for DNA recombination by continuous HJ branch migration. Branch migration allows RuvC to scan DNA until it finds its consensus sequence, where it cleaves and resolves cruciform DNA. The polypeptide is Holliday junction branch migration complex subunit RuvB (Rickettsia africae (strain ESF-5)).